Reading from the N-terminus, the 99-residue chain is uncharacterized protein (99 aa).

This is an uncharacterized protein from Borreliella burgdorferi (strain ATCC 35210 / DSM 4680 / CIP 102532 / B31) (Borrelia burgdorferi).